Reading from the N-terminus, the 556-residue chain is Formate--tetrahydrofolate ligase (556 aa).

Residue 65-72 (TPAGEGKT) coordinates ATP.

Belongs to the formate--tetrahydrofolate ligase family.

The catalysed reaction is (6S)-5,6,7,8-tetrahydrofolate + formate + ATP = (6R)-10-formyltetrahydrofolate + ADP + phosphate. It participates in one-carbon metabolism; tetrahydrofolate interconversion. This chain is Formate--tetrahydrofolate ligase, found in Symbiobacterium thermophilum (strain DSM 24528 / JCM 14929 / IAM 14863 / T).